The sequence spans 136 residues: Probable glycine cleavage system H protein 3 (136 aa).

Residues 28–109 (MVTVGITSLG…PYDAWIVKIK (82 aa)) form the Lipoyl-binding domain. N6-lipoyllysine is present on lysine 69.

It belongs to the GcvH family. The glycine cleavage system is composed of four proteins: P, T, L and H. The cofactor is (R)-lipoate.

Functionally, the glycine cleavage system catalyzes the degradation of glycine. The H protein shuttles the methylamine group of glycine from the P protein to the T protein. The sequence is that of Probable glycine cleavage system H protein 3 from Sulfurisphaera tokodaii (strain DSM 16993 / JCM 10545 / NBRC 100140 / 7) (Sulfolobus tokodaii).